The sequence spans 241 residues: Polyol phosphate phosphatase PYP1 (241 aa).

Catalysis depends on aspartate 9, which acts as the Nucleophile. 3 residues coordinate Mg(2+): aspartate 9, aspartate 11, and aspartate 179. Residue aspartate 11 is the Proton donor of the active site.

Belongs to the HAD-like hydrolase superfamily. Requires Mg(2+) as cofactor.

The protein resides in the cytoplasm. Its subcellular location is the nucleus. It catalyses the reaction D-ribitol 5-phosphate + H2O = ribitol + phosphate. The catalysed reaction is D-sorbitol 6-phosphate + H2O = D-sorbitol + phosphate. The enzyme catalyses sn-glycerol 1-phosphate + H2O = glycerol + phosphate. It carries out the reaction D-erythrose 4-phosphate + H2O = D-erythrose + phosphate. Hydrolyzes sugar alcohol (polyol) phosphates. Dephosphorylates a variety of substrates, including: sn-glycerol 1-phosphate (D-glycerol 3-phosphate), D-ribitol 5-phosphate, D-sorbitol 6-phosphate (D-glucitol 6-phosphate), and D-erythrose 4-phosphate. Prevents accumulation of toxic levels of polyol phosphates, which can impair glycolysis by inhibiting glucose-6-phosphate isomerase. This chain is Polyol phosphate phosphatase PYP1, found in Saccharomyces cerevisiae (strain ATCC 204508 / S288c) (Baker's yeast).